Consider the following 736-residue polypeptide: MSLSENSVFAYESSVHSTNVLLSLNDQRKKDVLCDVTIFVEGQRFRAHRSVLAACSSYFHSRIVGQADGELNITLPEEVTVKGFEPLIQFAYTAKLILSKENVDEVCKCVEFLSVHNIEESCFQFLKFKFLDSTADQQECPRKKCFSSHCQKTDLKLSLLDQRDLETDEVEEFLENKNVQTPQCKLRRYQGNAKASPPLQDSASQTYESMCLEKDAALALPSLCPKYRKFQKAFGTDRVRTGESSVKDIHASVQPNERSENECLGGVPECRDLQVMLKCDESKLAMEPEETKKDPASQCPTEKSEVTPFPHNSSIDPHGLYSLSLLHTYDQYGDLNFAGMQNTTVLTEKPLSGTDVQEKTFGESQDLPLKSDLGTREDSSVASSDRSSVEREVAEHLAKGFWSDICSTDTPCQMQLSPAVAKDGSEQISQKRSECPWLGIRISESPEPGQRTFTTLSSVNCPFISTLSTEGCSSNLEIGNDDYVSEPQQEPCPYACVISLGDDSETDTEGDSESCSAREQECEVKLPFNAQRIISLSRNDFQSLLKMHKLTPEQLDCIHDIRRRSKNRIAAQRCRKRKLDCIQNLESEIEKLQSEKESLLKERDHILSTLGETKQNLTGLCQKVCKEAALSQEQIQILAKYSAADCPLSFLISEKDKSTPDGELALPSIFSLSDRPPAVLPPCARGNSEPGYARGQESQQMSTATSEQAGPAEQCRQSGGISDFCQQMTDKCTTDE.

Residues Cys-34–Lys-100 form the BTB domain. The residue at position 196 (Ser-196) is a Phosphoserine. The segment covering Met-286–Pro-295 has biased composition (basic and acidic residues). Disordered stretches follow at residues Met-286 to Asn-312 and Lys-349 to Val-389. Ser-364 and Ser-445 each carry phosphoserine. The region spanning Cys-557 to Leu-620 is the bZIP domain. The basic motif stretch occupies residues Arg-562–Lys-578. The leucine-zipper stretch occupies residues Ile-582–Ile-589. A disordered region spans residues Leu-680 to Gly-719. Residues Gln-696–Gln-708 show a composition bias toward polar residues.

The protein belongs to the bZIP family. CNC subfamily. Heterodimer of BACH1 and MAFK. Post-translationally, ubiquitinated by the SCF(FBXL17) complex or by the by the SCF(FBXO22) complex, leading to its degradation by the proteasome. Under oxidative stress, reactive oxygen species covalently modify cysteine residues on the bZIP domain of BACH1 and release it from chromatin. If the BTB domain of BACH1 remains intact, its beta1-alpha6 degron is recognized by FBXO22, promoting its ubiquitination and degradation. If the structural integrity of the beta1-alpha6 degron is compromised, FBXL17 will transiently associate with the BACH1 BTB dimer and remodel it into stably bound monomer for ubiquitination and degradation.

It localises to the nucleus. Functionally, transcriptional regulator that acts as a repressor or activator, depending on the context. Binds to NF-E2 DNA binding sites. Plays important roles in coordinating transcription activation and repression by MAFK. Together with MAF, represses the transcription of genes under the control of the NFE2L2 oxidative stress pathway. The polypeptide is Transcription regulator protein BACH1 (Homo sapiens (Human)).